The primary structure comprises 134 residues: Small ribosomal subunit protein uS8c (134 aa).

Belongs to the universal ribosomal protein uS8 family. As to quaternary structure, part of the 30S ribosomal subunit.

It is found in the plastid. The protein localises to the chloroplast. Functionally, one of the primary rRNA binding proteins, it binds directly to 16S rRNA central domain where it helps coordinate assembly of the platform of the 30S subunit. The protein is Small ribosomal subunit protein uS8c (rps8) of Aethionema cordifolium (Lebanon stonecress).